We begin with the raw amino-acid sequence, 178 residues long: Ribosome maturation factor RimP (178 aa).

It belongs to the RimP family.

It localises to the cytoplasm. In terms of biological role, required for maturation of 30S ribosomal subunits. This Streptococcus pyogenes serotype M18 (strain MGAS8232) protein is Ribosome maturation factor RimP.